Here is a 245-residue protein sequence, read N- to C-terminus: Small ribosomal subunit protein uS2 (245 aa).

The protein belongs to the universal ribosomal protein uS2 family.

The protein is Small ribosomal subunit protein uS2 of Pseudomonas entomophila (strain L48).